The following is a 507-amino-acid chain: Histidine ammonia-lyase (507 aa).

The 5-imidazolinone (Ala-Gly) cross-link spans 141–143 (ASG). S142 carries the 2,3-didehydroalanine (Ser) modification.

The protein belongs to the PAL/histidase family. Contains an active site 4-methylidene-imidazol-5-one (MIO), which is formed autocatalytically by cyclization and dehydration of residues Ala-Ser-Gly.

Its subcellular location is the cytoplasm. The enzyme catalyses L-histidine = trans-urocanate + NH4(+). Its pathway is amino-acid degradation; L-histidine degradation into L-glutamate; N-formimidoyl-L-glutamate from L-histidine: step 1/3. In Burkholderia mallei (strain NCTC 10247), this protein is Histidine ammonia-lyase.